The sequence spans 105 residues: Cell division protein FtsB (105 aa).

The Cytoplasmic segment spans residues 1–3; that stretch reads MGK. The helical transmembrane segment at 4-21 threads the bilayer; that stretch reads LTLLLLVLLGWLQYSLWL. At 22 to 105 the chain is on the periplasmic side; sequence GKNGVHDLVR…PAAPATQDNQ (84 aa). The stretch at 28–62 forms a coiled coil; sequence DLVRVESDVAAQQSNNAQLKARNDQLFAEIDDLNG.

The protein belongs to the FtsB family. In terms of assembly, part of a complex composed of FtsB, FtsL and FtsQ.

It is found in the cell inner membrane. In terms of biological role, essential cell division protein. May link together the upstream cell division proteins, which are predominantly cytoplasmic, with the downstream cell division proteins, which are predominantly periplasmic. In Sodalis glossinidius (strain morsitans), this protein is Cell division protein FtsB.